Reading from the N-terminus, the 227-residue chain is ATP synthase F(0) complex subunit a (227 aa).

Helical transmembrane passes span 13–33, 69–89, 98–118, 132–152, 179–199, and 202–222; these read YLLG…LFPA, WALL…LGLL, QLSL…IIGM, EGTP…SLFI, VFVL…VLFL, and LLEV…LSLY.

The protein belongs to the ATPase A chain family. Component of the ATP synthase complex composed at least of ATP5F1A/subunit alpha, ATP5F1B/subunit beta, ATP5MC1/subunit c (homooctomer), MT-ATP6/subunit a, MT-ATP8/subunit 8, ATP5ME/subunit e, ATP5MF/subunit f, ATP5MG/subunit g, ATP5MK/subunit k, ATP5MJ/subunit j, ATP5F1C/subunit gamma, ATP5F1D/subunit delta, ATP5F1E/subunit epsilon, ATP5PF/subunit F6, ATP5PB/subunit b, ATP5PD/subunit d, ATP5PO/subunit OSCP. ATP synthase complex consists of a soluble F(1) head domain (subunits alpha(3) and beta(3)) - the catalytic core - and a membrane F(0) domain - the membrane proton channel (subunits c, a, 8, e, f, g, k and j). These two domains are linked by a central stalk (subunits gamma, delta, and epsilon) rotating inside the F1 region and a stationary peripheral stalk (subunits F6, b, d, and OSCP). Interacts with DNAJC30; interaction is direct.

The protein resides in the mitochondrion inner membrane. The catalysed reaction is H(+)(in) = H(+)(out). Subunit a, of the mitochondrial membrane ATP synthase complex (F(1)F(0) ATP synthase or Complex V) that produces ATP from ADP in the presence of a proton gradient across the membrane which is generated by electron transport complexes of the respiratory chain. ATP synthase complex consist of a soluble F(1) head domain - the catalytic core - and a membrane F(1) domain - the membrane proton channel. These two domains are linked by a central stalk rotating inside the F(1) region and a stationary peripheral stalk. During catalysis, ATP synthesis in the catalytic domain of F(1) is coupled via a rotary mechanism of the central stalk subunits to proton translocation. With the subunit c (ATP5MC1), forms the proton-conducting channel in the F(0) domain, that contains two crucial half-channels (inlet and outlet) that facilitate proton movement from the mitochondrial intermembrane space (IMS) into the matrix. Protons are taken up via the inlet half-channel and released through the outlet half-channel, following a Grotthuss mechanism. This is ATP synthase F(0) complex subunit a from Danio rerio (Zebrafish).